Here is a 310-residue protein sequence, read N- to C-terminus: Aspartate carbamoyltransferase catalytic subunit (310 aa).

Positions 58 and 59 each coordinate carbamoyl phosphate. K86 serves as a coordination point for L-aspartate. 3 residues coordinate carbamoyl phosphate: R108, H136, and Q139. L-aspartate is bound by residues R169 and R224. Carbamoyl phosphate is bound by residues G265 and P266.

This sequence belongs to the aspartate/ornithine carbamoyltransferase superfamily. ATCase family. As to quaternary structure, heterododecamer (2C3:3R2) of six catalytic PyrB chains organized as two trimers (C3), and six regulatory PyrI chains organized as three dimers (R2).

The catalysed reaction is carbamoyl phosphate + L-aspartate = N-carbamoyl-L-aspartate + phosphate + H(+). Its pathway is pyrimidine metabolism; UMP biosynthesis via de novo pathway; (S)-dihydroorotate from bicarbonate: step 2/3. In terms of biological role, catalyzes the condensation of carbamoyl phosphate and aspartate to form carbamoyl aspartate and inorganic phosphate, the committed step in the de novo pyrimidine nucleotide biosynthesis pathway. This Geobacter sp. (strain M21) protein is Aspartate carbamoyltransferase catalytic subunit.